Here is a 315-residue protein sequence, read N- to C-terminus: Cytochrome c biogenesis protein CcsA (315 aa).

Transmembrane regions (helical) follow at residues 14 to 34 (VVSLGLAAFLFLLIALPISFW), 72 to 92 (ISNLYESLCFLTWGCTLAQLF), 101 to 121 (IVSAVATPVSLLSIGFASFVL), 146 to 166 (VIMCSYAALLIGSILSFGVFL), 221 to 241 (SITAGFLLLTVGLISGAVWAN), 255 to 272 (TWALICWLVYAAYLHTRL), and 282 to 302 (AILAIAGFFVIIVCYIGVNLL).

This sequence belongs to the CcmF/CycK/Ccl1/NrfE/CcsA family. In terms of assembly, may interact with ccs1.

It localises to the cellular thylakoid membrane. Its function is as follows. Required during biogenesis of c-type cytochromes (cytochrome c6 and cytochrome f) at the step of heme attachment. This is Cytochrome c biogenesis protein CcsA from Prochlorococcus marinus (strain NATL1A).